Here is a 330-residue protein sequence, read N- to C-terminus: Aspartate--ammonia ligase (330 aa).

It belongs to the class-II aminoacyl-tRNA synthetase family. AsnA subfamily.

It localises to the cytoplasm. The catalysed reaction is L-aspartate + NH4(+) + ATP = L-asparagine + AMP + diphosphate + H(+). The protein operates within amino-acid biosynthesis; L-asparagine biosynthesis; L-asparagine from L-aspartate (ammonia route): step 1/1. This Streptococcus agalactiae serotype Ia (strain ATCC 27591 / A909 / CDC SS700) protein is Aspartate--ammonia ligase.